The chain runs to 1212 residues: DNA-directed RNA polymerase subunit beta' (1212 aa).

Zn(2+)-binding residues include Cys-60, Cys-62, Cys-75, and Cys-78. Mg(2+) contacts are provided by Asp-450, Asp-452, and Asp-454. Zn(2+) contacts are provided by Cys-819, Cys-893, Cys-900, and Cys-903.

Belongs to the RNA polymerase beta' chain family. The RNAP catalytic core consists of 2 alpha, 1 beta, 1 beta' and 1 omega subunit. When a sigma factor is associated with the core the holoenzyme is formed, which can initiate transcription. Mg(2+) is required as a cofactor. It depends on Zn(2+) as a cofactor.

It catalyses the reaction RNA(n) + a ribonucleoside 5'-triphosphate = RNA(n+1) + diphosphate. Its function is as follows. DNA-dependent RNA polymerase catalyzes the transcription of DNA into RNA using the four ribonucleoside triphosphates as substrates. This Streptococcus thermophilus (strain CNRZ 1066) protein is DNA-directed RNA polymerase subunit beta'.